We begin with the raw amino-acid sequence, 130 residues long: Small ribosomal subunit protein uS11c (130 aa).

The protein belongs to the universal ribosomal protein uS11 family. Part of the 30S ribosomal subunit.

The protein localises to the plastid. Its subcellular location is the chloroplast. In Cycas taitungensis (Prince sago), this protein is Small ribosomal subunit protein uS11c.